The primary structure comprises 557 residues: Formate--tetrahydrofolate ligase (557 aa).

Thr-66–Ser-73 serves as a coordination point for ATP.

It belongs to the formate--tetrahydrofolate ligase family.

It carries out the reaction (6S)-5,6,7,8-tetrahydrofolate + formate + ATP = (6R)-10-formyltetrahydrofolate + ADP + phosphate. The protein operates within one-carbon metabolism; tetrahydrofolate interconversion. This is Formate--tetrahydrofolate ligase from Clostridium botulinum (strain Okra / Type B1).